Here is a 270-residue protein sequence, read N- to C-terminus: Nuclease PA3 (270 aa).

The a divalent metal cation site is built by W1, H6, H15, D45, and H60. 1 to 6 (WGALGH) is a substrate binding site. Substrate-binding positions include 45–51 (DEYRLTS), 60–63 (HFID), and 73–78 (NVDYER). Intrachain disulfides connect C72–C217 and C80–C85. Residue N92 coordinates substrate. N-linked (GlcNAc...) asparagine glycosylation is present at N92. Residues H116, D120, and H126 each coordinate a divalent metal cation. The segment at 116 to 164 (HFIGDMTQPLHDEAYAVGGNKINVTFDGYHDNLHSDWDTYMPQKLIGGH) is substrate binding. N-linked (GlcNAc...) asparagine glycosylation occurs at N138. Residues H149 and D153 each coordinate a divalent metal cation. 2 N-linked (GlcNAc...) asparagine glycosylation sites follow: N184 and N197.

This sequence belongs to the nuclease type I family. The cofactor is Zn(2+).

Its subcellular location is the secreted. The enzyme catalyses a ribonucleoside 3'-phosphate + H2O = a ribonucleoside + phosphate. In terms of biological role, hydrolyzes only single-stranded DNA and RNA without apparent specificity for bases. In Penicillium sp, this protein is Nuclease PA3.